The primary structure comprises 643 residues: Threonine--tRNA ligase (643 aa).

Residues 1 to 62 (MSFSVTLPDG…DEDVEAAIIT (62 aa)) enclose the TGS domain. The interval 239 to 537 (DHRTIGRDLD…LTEIYKGAFP (299 aa)) is catalytic. Residues cysteine 333, histidine 384, and histidine 514 each contribute to the Zn(2+) site.

It belongs to the class-II aminoacyl-tRNA synthetase family. In terms of assembly, homodimer. Zn(2+) serves as cofactor.

The protein resides in the cytoplasm. It catalyses the reaction tRNA(Thr) + L-threonine + ATP = L-threonyl-tRNA(Thr) + AMP + diphosphate + H(+). Its function is as follows. Catalyzes the attachment of threonine to tRNA(Thr) in a two-step reaction: L-threonine is first activated by ATP to form Thr-AMP and then transferred to the acceptor end of tRNA(Thr). Also edits incorrectly charged L-seryl-tRNA(Thr). The sequence is that of Threonine--tRNA ligase from Lactobacillus gasseri (strain ATCC 33323 / DSM 20243 / BCRC 14619 / CIP 102991 / JCM 1131 / KCTC 3163 / NCIMB 11718 / NCTC 13722 / AM63).